The following is a 691-amino-acid chain: Probable E3 ubiquitin-protein ligase RHG1A (691 aa).

Disordered stretches follow at residues 71–91 (SLGE…NEQR), 151–235 (GPGT…PRGM), 316–336 (SFVV…GSRT), 349–373 (VGGT…SRSI), and 395–501 (QSSR…MHNR). The segment covering 80–91 (TKDEASSHNEQR) has biased composition (basic and acidic residues). Composition is skewed to polar residues over residues 204–213 (GESSSWTPGS) and 317–328 (FVVSRNPNSTPV). The span at 361 to 370 (RNLHLDETRS) shows a compositional bias: basic and acidic residues. Positions 395–406 (QSSRNVTNGNLN) are enriched in polar residues. The span at 407 to 419 (SASSVSRTGSTTS) shows a compositional bias: low complexity. Residues 429–440 (NLAWTSYQNSPH) show a composition bias toward polar residues. Residues 454–465 (RSLLSSLAADAT) are compositionally biased toward low complexity. The RING-type; atypical zinc-finger motif lies at 637 to 678 (CCVCQEEYTEGEDMGTLECGHEFHSQCIKEWLKQKNLCPICK).

As to expression, expressed in stems, flowers, green siliques, cauline leaves, seeds and roots.

It catalyses the reaction S-ubiquitinyl-[E2 ubiquitin-conjugating enzyme]-L-cysteine + [acceptor protein]-L-lysine = [E2 ubiquitin-conjugating enzyme]-L-cysteine + N(6)-ubiquitinyl-[acceptor protein]-L-lysine.. The protein operates within protein modification; protein ubiquitination. Probable E3 ubiquitin-protein ligase that may possess E3 ubiquitin ligase activity in vitro. This chain is Probable E3 ubiquitin-protein ligase RHG1A, found in Arabidopsis thaliana (Mouse-ear cress).